A 286-amino-acid chain; its full sequence is Translocon-associated protein subunit alpha (286 aa).

The signal sequence occupies residues 1 to 18 (MRLLPRLLLLLLLVFPAT). The Lumenal portion of the chain corresponds to 19–207 (VLFRGGPRGL…EREDGLDGET (189 aa)). The span at 39 to 75 (EETVEDSIIEDEDDEAEVEEDEPTDLVEDKEEEDVSG) shows a compositional bias: acidic residues. The disordered stretch occupies residues 39 to 83 (EETVEDSIIEDEDDEAEVEEDEPTDLVEDKEEEDVSGEPEASPSA). N-linked (GlcNAc...) asparagine glycans are attached at residues asparagine 136 and asparagine 191. Residues 208 to 228 (IFMYMFLAGLGLLVIVGLHQL) traverse the membrane as a helical segment. At 229–286 (LESRKRKRPIQKVEMGTSSQNDVDMSWIPQETLNQINKASPRRLPRKRAQKRSVGSDE) the chain is on the cytoplasmic side. Serine 247 carries the phosphoserine modification. Residue threonine 260 is modified to Phosphothreonine. Residues 261-286 (LNQINKASPRRLPRKRAQKRSVGSDE) form a disordered region. At serine 268 the chain carries Phosphoserine. The span at 268 to 279 (SPRRLPRKRAQK) shows a compositional bias: basic residues.

This sequence belongs to the TRAP-alpha family. Heterotetramer of TRAP-alpha, TRAP-beta, TRAP-delta and TRAP-gamma. Interacts with palmitoylated calnexin (CALX), the interaction is required for efficient folding of glycosylated proteins.

It is found in the endoplasmic reticulum membrane. In terms of biological role, TRAP proteins are part of a complex whose function is to bind calcium to the ER membrane and thereby regulate the retention of ER resident proteins. May be involved in the recycling of the translocation apparatus after completion of the translocation process or may function as a membrane-bound chaperone facilitating folding of translocated proteins. The chain is Translocon-associated protein subunit alpha (SSR1) from Homo sapiens (Human).